The primary structure comprises 175 residues: Ribosome maturation factor RimP (175 aa).

The interval 152-175 (EFNRPTDGPGDDGDDGGDDEAGEA) is disordered. A compositionally biased stretch (acidic residues) spans 160–175 (PGDDGDDGGDDEAGEA).

The protein belongs to the RimP family.

It localises to the cytoplasm. Its function is as follows. Required for maturation of 30S ribosomal subunits. This chain is Ribosome maturation factor RimP, found in Nocardioides sp. (strain ATCC BAA-499 / JS614).